Here is a 159-residue protein sequence, read N- to C-terminus: Crossover junction endodeoxyribonuclease RuvC (159 aa).

Residues Asp-7, Glu-67, and Asp-139 contribute to the active site. Mg(2+)-binding residues include Asp-7, Glu-67, and Asp-139.

It belongs to the RuvC family. Homodimer which binds Holliday junction (HJ) DNA. The HJ becomes 2-fold symmetrical on binding to RuvC with unstacked arms; it has a different conformation from HJ DNA in complex with RuvA. In the full resolvosome a probable DNA-RuvA(4)-RuvB(12)-RuvC(2) complex forms which resolves the HJ. Mg(2+) is required as a cofactor.

The protein localises to the cytoplasm. The enzyme catalyses Endonucleolytic cleavage at a junction such as a reciprocal single-stranded crossover between two homologous DNA duplexes (Holliday junction).. Functionally, the RuvA-RuvB-RuvC complex processes Holliday junction (HJ) DNA during genetic recombination and DNA repair. Endonuclease that resolves HJ intermediates. Cleaves cruciform DNA by making single-stranded nicks across the HJ at symmetrical positions within the homologous arms, yielding a 5'-phosphate and a 3'-hydroxyl group; requires a central core of homology in the junction. The consensus cleavage sequence is 5'-(A/T)TT(C/G)-3'. Cleavage occurs on the 3'-side of the TT dinucleotide at the point of strand exchange. HJ branch migration catalyzed by RuvA-RuvB allows RuvC to scan DNA until it finds its consensus sequence, where it cleaves and resolves the cruciform DNA. The chain is Crossover junction endodeoxyribonuclease RuvC from Orientia tsutsugamushi (strain Boryong) (Rickettsia tsutsugamushi).